Consider the following 56-residue polypeptide: Small ribosomal subunit protein uS14 (56 aa).

Serine 9 carries the phosphoserine modification. Omega-N-methylarginine is present on arginine 12. 4 residues coordinate Zn(2+): cysteine 21, cysteine 24, cysteine 39, and cysteine 42. Residue lysine 48 is modified to N6-acetyllysine.

Belongs to the universal ribosomal protein uS14 family. In terms of assembly, component of the 40S small ribosomal subunit. Requires Zn(2+) as cofactor.

It localises to the cytoplasm. It is found in the cytosol. Its subcellular location is the rough endoplasmic reticulum. Component of the small ribosomal subunit. The ribosome is a large ribonucleoprotein complex responsible for the synthesis of proteins in the cell. The polypeptide is Small ribosomal subunit protein uS14 (RPS29) (Sus scrofa (Pig)).